A 541-amino-acid chain; its full sequence is Protein panoramix (541 aa).

The interval 1-169 (MEAPMKLEVK…TLVPDEQQSF (169 aa)) is interaction with Piwi. Disordered stretches follow at residues 52–75 (SDPEDGNLVHHSATPTSDEHLQPS) and 198–281 (TAEN…TELD). Positions 194 to 216 (MLEMTAENRKVKHKKKKHKKERS) form a coiled coil. The segment covering 203 to 220 (KVKHKKKKHKKERSHRSN) has biased composition (basic residues). 2 stretches are compositionally biased toward basic and acidic residues: residues 241–251 (DDKNQFDCDYR) and 269–279 (SSKERKLRDTE). The interval 315–343 (LSKADKRSLAVARAELVLEQIQQKANKEE) is nxf2-interacting region (NIR). The stretch at 323-343 (LAVARAELVLEQIQQKANKEE) forms a coiled coil. The tract at residues 387-446 (TPGTRIDLSKWGLETVPEATKRLLRLLGIDVARLKELQSTVKPSQRILKLKKEQLEQGLA) is necessary for interaction with nxf2 and protein stability.

In terms of assembly, in the ovaries, part of a complex composed of at least Panx, nxf2, piwi and Nxt1. The complex is knowns as Panx-induced cotranscriptional silencing (PICTS) complex, Panx-nxf2-dependent TAP/p15 silencing (Pandas complex), SFiNX (silencing factor interacting nuclear export variant) or piwi-Panx-nxf2-p15 (PPNP) complex. Interacts (via NIR region) with nxf2 (via TAP-C domain); the interaction is direct. Expressed in female gonads (at protein level).

The protein localises to the nucleus. In terms of biological role, acts via the piwi-interacting RNA (piRNA) pathway which mediates the repression of transposable elements during meiosis by forming complexes composed of piRNAs and piwi proteins and governs the methylation and subsequent repression of transposons. Required for transcriptional silencing of transposons targeted by piwi and confers its effects by interacting with nascent RNA transcripts. Likely to be recruited to nascent transcripts cotranscriptionally by piwi and to recruit additional factors involved in transcriptional silencing. In the ovaries, forms a complex with nxf2, piwi and Nxt1 which acts as effectors of cotranscriptional transposon silencing. The interaction with nxf2 stabilizes the nuclear protein complex. This chain is Protein panoramix, found in Drosophila melanogaster (Fruit fly).